Here is a 672-residue protein sequence, read N- to C-terminus: Flap endonuclease 1 (672 aa).

Positions 1 to 106 (MGIKGLIGFL…QTLAKRKLLR (106 aa)) are N-domain. Position 34 (aspartate 34) interacts with Mg(2+). Residues arginine 47 and arginine 72 each coordinate DNA. Positions 88, 160, 162, 181, and 183 each coordinate Mg(2+). The interval 124 to 252 (AIRKYVGRTV…KTAYNLIKKH (129 aa)) is I-domain. Glutamate 160 provides a ligand contact to DNA. Residues glycine 230 and aspartate 232 each contribute to the DNA site. Mg(2+) is bound at residue aspartate 232. Positions 327 to 335 (TQLSLKSFF) are interaction with PCNA. The tract at residues 361–436 (VESAVDSTSD…DAKKRNKRVP (76 aa)) is disordered. A compositionally biased stretch (basic and acidic residues) spans 370 to 382 (DDGKDEVPSDDKV).

It belongs to the XPG/RAD2 endonuclease family. FEN1 subfamily. Interacts with PCNA. Three molecules of FEN1 bind to one PCNA trimer with each molecule binding to one PCNA monomer. PCNA stimulates the nuclease activity without altering cleavage specificity. Mg(2+) serves as cofactor. Phosphorylated. Phosphorylation upon DNA damage induces relocalization to the nuclear plasma.

It localises to the nucleus. The protein resides in the nucleolus. Its subcellular location is the nucleoplasm. The protein localises to the mitochondrion. In terms of biological role, structure-specific nuclease with 5'-flap endonuclease and 5'-3' exonuclease activities involved in DNA replication and repair. During DNA replication, cleaves the 5'-overhanging flap structure that is generated by displacement synthesis when DNA polymerase encounters the 5'-end of a downstream Okazaki fragment. It enters the flap from the 5'-end and then tracks to cleave the flap base, leaving a nick for ligation. Also involved in the long patch base excision repair (LP-BER) pathway, by cleaving within the apurinic/apyrimidinic (AP) site-terminated flap. Acts as a genome stabilization factor that prevents flaps from equilibrating into structures that lead to duplications and deletions. Also possesses 5'-3' exonuclease activity on nicked or gapped double-stranded DNA, and exhibits RNase H activity. Also involved in replication and repair of rDNA and in repairing mitochondrial DNA. The protein is Flap endonuclease 1 of Babesia bovis.